A 200-amino-acid polypeptide reads, in one-letter code: MQIVMFDRQSIFIHGMKISLQQRIPGVSIQGASQADELWQKLESYPEALVMLDGDQDGEFCYWLLQKTVVQFPEVKVLITATDCNKRWLQEVIHFNVLAIVPRDSTVETFALAVNSAAMGMMFLPGDWRTTPEKDIKDLKSLSARQREILTMLAAGESNKEIGRALNISTGTVKAHLESLYRRLEVKNRTQAAMMLNISS.

Residues 135–200 form the HTH luxR-type domain; sequence DIKDLKSLSA…QAAMMLNISS (66 aa). The segment at residues 159 to 178 is a DNA-binding region (H-T-H motif); the sequence is NKEIGRALNISTGTVKAHLE.

The polypeptide is Putative HTH-type transcriptional regulator YhjB (yhjB) (Escherichia coli (strain K12)).